The chain runs to 506 residues: MLEKLIILDFGSQTTQLIARRIRELNTYCEVYPYNKLPEDLSGVRGIILSGSPYSVYDSKAFRIELSELRGKLPLLGICYGAQSLVHQAGGKVEPCDSREYGRTHLTLRQPDDALLTGLQSGTTVWMSHGDTITSLPEGFEVIAGTEDVPNAAFRIRGEKTWGVQFHPEIYHSEEGTKLLGNFLDICGMKRDWTPASFIEATVQELRERLGDDKVILALSGGVDSSVVAVLLNKAIGRNLTCIFVDHGLLRKGEFERVLQDYEHLGLNVIGVNAKEKFFAALSGVTDPEQKRKIIGRGFIEVFDEEARKLKDIKWLGQGTIYPDVIESLSITGMVIKSHHNVGGLPERMNLRLVEPLRMLFKDEVRRVGLELGMMPHLIHRHPFPGPGLGIRILGEITEEKATILQNADDIYMSLMREWGLYDQVWQAGAILLPVRSVGVMGDERTYEYTVALRAVTSMDAMSADWVHLPYDFLAKVSNEIINKVRGVNRVVYDISSKPPSTIEWE.

The 189-residue stretch at 4–192 folds into the Glutamine amidotransferase type-1 domain; it reads KLIILDFGSQ…FLDICGMKRD (189 aa). Cysteine 79 functions as the Nucleophile in the catalytic mechanism. Residues histidine 167 and glutamate 169 contribute to the active site. The 189-residue stretch at 193–381 folds into the GMPS ATP-PPase domain; the sequence is WTPASFIEAT…LGMMPHLIHR (189 aa). Residue 220–226 coordinates ATP; the sequence is SGGVDSS.

In terms of assembly, homodimer.

The catalysed reaction is XMP + L-glutamine + ATP + H2O = GMP + L-glutamate + AMP + diphosphate + 2 H(+). The protein operates within purine metabolism; GMP biosynthesis; GMP from XMP (L-Gln route): step 1/1. Catalyzes the synthesis of GMP from XMP. The chain is GMP synthase [glutamine-hydrolyzing] from Porphyromonas gingivalis (strain ATCC BAA-308 / W83).